Here is a 93-residue protein sequence, read N- to C-terminus: uncharacterized protein (93 aa).

A helical membrane pass occupies residues 12 to 32; the sequence is VVGGLSFWTFSAGLIMIVNAL. Positions 47–66 are disordered; it reads TANANGSDDDNENKNNSYRS.

The protein localises to the cell membrane. This is an uncharacterized protein from Mycoplasma genitalium (strain ATCC 33530 / DSM 19775 / NCTC 10195 / G37) (Mycoplasmoides genitalium).